The chain runs to 366 residues: Aminomethyltransferase (366 aa).

This sequence belongs to the GcvT family. As to quaternary structure, the glycine cleavage system is composed of four proteins: P, T, L and H.

The enzyme catalyses N(6)-[(R)-S(8)-aminomethyldihydrolipoyl]-L-lysyl-[protein] + (6S)-5,6,7,8-tetrahydrofolate = N(6)-[(R)-dihydrolipoyl]-L-lysyl-[protein] + (6R)-5,10-methylene-5,6,7,8-tetrahydrofolate + NH4(+). The glycine cleavage system catalyzes the degradation of glycine. In Bordetella avium (strain 197N), this protein is Aminomethyltransferase.